A 414-amino-acid chain; its full sequence is Serine/threonine transporter SstT (414 aa).

Residues 2-15 (TTQRSPGLFRRLAH) are Cytoplasmic-facing. The helical transmembrane segment at 16-36 (GSLVKQILVGLVLGILLAWIS) threads the bilayer. Topologically, residues 37 to 45 (KPAAEAVGL) are periplasmic. A helical membrane pass occupies residues 46 to 66 (LGTLFVGALKAVAPILVLMLV). Residues 67 to 83 (MASIANHQHGQKTNIRP) lie on the Cytoplasmic side of the membrane. A helical transmembrane segment spans residues 84 to 104 (ILFLYLLGTFSAALAAVVFSF). At 105-142 (AFPSTLHLSSSAGDISPPSGIVEVMRGLVMSMVSNPID) the chain is on the periplasmic side. Residues 143–163 (ALLKGNYIGILVWAIGLGFAL) traverse the membrane as a helical segment. Residues 164–179 (RHGNETTKNLVNDMSN) are Cytoplasmic-facing. The chain crosses the membrane as a helical span at residues 180–200 (AVTFMVKLVIRFAPIGIFGLV). Over 201-217 (SSTLATTGFSTLWGYAQ) the chain is Periplasmic. A helical transmembrane segment spans residues 218–238 (LLVVLVGCMLLVALVVNPLLV). Topologically, residues 239 to 299 (WWKIRRNPFP…VSIPLGATIN (61 aa)) are cytoplasmic. The helical transmembrane segment at 300–320 (MAGAAITITVLTLAAVNTLGI) threads the bilayer. Residues 321 to 331 (PVDLPTALLLS) are Periplasmic-facing. The chain crosses the membrane as a helical span at residues 332-352 (VVASLCACGASGVAGGSLLLI). Residues 353–414 (PLACNMFGIS…DRLANSALRN (62 aa)) are Cytoplasmic-facing.

It belongs to the dicarboxylate/amino acid:cation symporter (DAACS) (TC 2.A.23) family.

The protein resides in the cell inner membrane. It carries out the reaction L-serine(in) + Na(+)(in) = L-serine(out) + Na(+)(out). The catalysed reaction is L-threonine(in) + Na(+)(in) = L-threonine(out) + Na(+)(out). In terms of biological role, involved in the import of serine and threonine into the cell, with the concomitant import of sodium (symport system). This is Serine/threonine transporter SstT from Shigella flexneri serotype 5b (strain 8401).